We begin with the raw amino-acid sequence, 134 residues long: D-ribose pyranase (134 aa).

His20 acts as the Proton donor in catalysis. Substrate is bound by residues Asp28, His101, and 123-125; that span reads YCN.

The protein belongs to the RbsD / FucU family. RbsD subfamily. In terms of assembly, homodecamer.

It is found in the cytoplasm. It catalyses the reaction beta-D-ribopyranose = beta-D-ribofuranose. It functions in the pathway carbohydrate metabolism; D-ribose degradation; D-ribose 5-phosphate from beta-D-ribopyranose: step 1/2. In terms of biological role, catalyzes the interconversion of beta-pyran and beta-furan forms of D-ribose. This is D-ribose pyranase from Pseudomonas fluorescens (strain SBW25).